We begin with the raw amino-acid sequence, 244 residues long: Large ribosomal subunit protein uL3 (244 aa).

The protein belongs to the universal ribosomal protein uL3 family. As to quaternary structure, part of the 50S ribosomal subunit. Forms a cluster with proteins L14 and L19.

Functionally, one of the primary rRNA binding proteins, it binds directly near the 3'-end of the 23S rRNA, where it nucleates assembly of the 50S subunit. The sequence is that of Large ribosomal subunit protein uL3 from Aquifex pyrophilus.